A 215-amino-acid polypeptide reads, in one-letter code: 3-dehydroquinate dehydratase (215 aa).

Residues 27–29 and Arg54 contribute to the 3-dehydroquinate site; that span reads EVR. The active-site Proton donor/acceptor is the His112. Lys139 (schiff-base intermediate with substrate) is an active-site residue. 3-dehydroquinate contacts are provided by Arg176 and Gln198.

Belongs to the type-I 3-dehydroquinase family. In terms of assembly, homodimer.

The enzyme catalyses 3-dehydroquinate = 3-dehydroshikimate + H2O. It functions in the pathway metabolic intermediate biosynthesis; chorismate biosynthesis; chorismate from D-erythrose 4-phosphate and phosphoenolpyruvate: step 3/7. Involved in the third step of the chorismate pathway, which leads to the biosynthesis of aromatic amino acids. Catalyzes the cis-dehydration of 3-dehydroquinate (DHQ) and introduces the first double bond of the aromatic ring to yield 3-dehydroshikimate. This chain is 3-dehydroquinate dehydratase, found in Thermococcus onnurineus (strain NA1).